The following is a 782-amino-acid chain: General transcription and DNA repair factor IIH helicase/translocase subunit XPB (782 aa).

Basic and acidic residues predominate over residues 1–11 (MGKRDRADRDK). 2 disordered regions span residues 1 to 51 (MGKR…ESGT) and 218 to 241 (SAIS…PQGK). The short motif at 6–18 (RADRDKKKSRKRH) is the Nuclear localization signal element. A compositionally biased stretch (acidic residues) spans 21–30 (DEEDDEEDAP). Residues 218 to 236 (SAISKTAESSGGPSTSRVT) are compositionally biased toward polar residues. Residues 327 to 488 (MFGNGRARSG…DLNFLIGPKL (162 aa)) enclose the Helicase ATP-binding domain. Residue 340–347 (LPCGAGKS) participates in ATP binding. Residues 441-444 (DEVH) carry the DEVH box motif. The 161-residue stretch at 542 to 702 (RACQFLIKFH…LAGMEEEDLA (161 aa)) folds into the Helicase C-terminal domain. The residue at position 686 (Ser686) is a Phosphoserine. A Phosphoserine; by CK2 modification is found at Ser751.

This sequence belongs to the helicase family. RAD25/XPB subfamily. As to quaternary structure, component of the 7-subunit TFIIH core complex composed of XPB/ERCC3, XPD/ERCC2, GTF2H1, GTF2H2, GTF2H3, GTF2H4 and GTF2H5, which is active in NER. The core complex associates with the 3-subunit CDK-activating kinase (CAK) module composed of CCNH/cyclin H, CDK7 and MNAT1 to form the 10-subunit holoenzyme (holo-TFIIH) active in transcription. Interacts with PUF60. Interacts with ATF7IP. Interacts with KAT2A; leading to KAT2A recruitment to promoters and acetylation of histones. Part of TBP-based Pol II pre-initiation complex (PIC), in which Pol II core assembles with general transcription factors and other specific initiation factors including GTF2E1, GTF2E2, GTF2F1, GTF2F2, TCEA1, ERCC2, ERCC3, GTF2H2, GTF2H3, GTF2H4, GTF2H5, GTF2A1, GTF2A2, GTF2B and TBP; this large multi-subunit PIC complex mediates DNA unwinding and targets Pol II core to the transcription start site where the first phosphodiester bond forms. Phosphorylation on Ser-751 by CK2 controls the 5'-excision activity of ERCC1-XPF endonuclease; phosphorylated protein inhibits the excision activity and thus NER. Dephosphorylation reactivates the 5'-excision step. Phosphorylation has no effect on transcription or the 3'-5' helicase activity.

It localises to the nucleus. The catalysed reaction is Couples ATP hydrolysis with the unwinding of duplex DNA by translocating in the 3'-5' direction.. It catalyses the reaction ATP + H2O = ADP + phosphate + H(+). With respect to regulation, phosphorylation on Ser-751 by CK2 controls the 5'-excision activity of ERCC1-XPF endonuclease; phosphorylated protein inhibits the excision activity and thus NER. ATPase activity is stimulated by TFIIH subunit p52 (GTF2H4). DNA translocase activity by this subunit in TFIIH is stimulated by XPA, ERCC5/XPG and XFP plus ERCC1. ATP-dependent 3'-5' DNA helicase/translocase; binds dsDNA rather than ssDNA, unzipping it in a translocase rather than classical helicase activity. Component of the general transcription and DNA repair factor IIH (TFIIH) core complex. When complexed to CDK-activating kinase (CAK), involved in RNA transcription by RNA polymerase II. The ATPase activity of XPB/ERCC3, but not its helicase activity, is required for DNA opening; it may wrap around the damaged DNA wedging it open, causing localized melting and twisting that allows XPD/ERCC2 helicase to anchor. The ATP-dependent helicase activity of XPB/ERCC3 may be required for promoter escape. Also involved in transcription-coupled nucleotide excision repair (NER) of damaged DNA. In NER, TFIIH acts by opening DNA around the lesion to allow the excision of the damaged oligonucleotide and its replacement by a new DNA fragment. The structure of the TFIIH transcription complex differs from the NER-TFIIH complex; large movements by XPD/ERCC2 and XPB/ERCC3 are stabilized by XPA. This is General transcription and DNA repair factor IIH helicase/translocase subunit XPB (ERCC3) from Pongo abelii (Sumatran orangutan).